A 499-amino-acid polypeptide reads, in one-letter code: 2,3-bisphosphoglycerate-independent phosphoglycerate mutase (499 aa).

Mn(2+)-binding residues include D10 and S60. The active-site Phosphoserine intermediate is the S60. Substrate contacts are provided by residues H121, 151–152, R182, R188, 253–256, and K326; these read RD and RPDR. Residues D391, H395, D434, H435, and H452 each contribute to the Mn(2+) site.

Belongs to the BPG-independent phosphoglycerate mutase family. In terms of assembly, monomer. Requires Mn(2+) as cofactor.

The catalysed reaction is (2R)-2-phosphoglycerate = (2R)-3-phosphoglycerate. The protein operates within carbohydrate degradation; glycolysis; pyruvate from D-glyceraldehyde 3-phosphate: step 3/5. Catalyzes the interconversion of 2-phosphoglycerate and 3-phosphoglycerate. This chain is 2,3-bisphosphoglycerate-independent phosphoglycerate mutase, found in Metamycoplasma hominis (strain ATCC 23114 / DSM 25592 / NBRC 14850 / NCTC 10111 / PG21) (Mycoplasma hominis).